The primary structure comprises 325 residues: DNA-directed RNA polymerase subunit alpha (325 aa).

Positions 1 to 238 are alpha N-terminal domain (alpha-NTD); sequence MSLKSLLKGF…EHLTVFINFE (238 aa). Residues 255-325 form an alpha C-terminal domain (alpha-CTD) region; that stretch reads LKASLSKHVE…LGLSFGMRDF (71 aa).

The protein belongs to the RNA polymerase alpha chain family. As to quaternary structure, homodimer. The RNAP catalytic core consists of 2 alpha, 1 beta, 1 beta' and 1 omega subunit. When a sigma factor is associated with the core the holoenzyme is formed, which can initiate transcription.

The enzyme catalyses RNA(n) + a ribonucleoside 5'-triphosphate = RNA(n+1) + diphosphate. In terms of biological role, DNA-dependent RNA polymerase catalyzes the transcription of DNA into RNA using the four ribonucleoside triphosphates as substrates. This Leptospira interrogans serogroup Icterohaemorrhagiae serovar copenhageni (strain Fiocruz L1-130) protein is DNA-directed RNA polymerase subunit alpha.